The following is a 684-amino-acid chain: UvrABC system protein C (684 aa).

Residues 16–95 (TDPGVYKFRD…IKRFDPRFNV (80 aa)) enclose the GIY-YIG domain. A UVR domain is found at 208-243 (APVRKRVTQRMEEAAENLEFELAARLRDDLGAIDKL). The segment covering 332-352 (EAAEDAKLERRGVDQESHAEP) has biased composition (basic and acidic residues). The segment at 332–357 (EAAEDAKLERRGVDQESHAEPRQGNA) is disordered.

The protein belongs to the UvrC family. As to quaternary structure, interacts with UvrB in an incision complex.

It is found in the cytoplasm. Functionally, the UvrABC repair system catalyzes the recognition and processing of DNA lesions. UvrC both incises the 5' and 3' sides of the lesion. The N-terminal half is responsible for the 3' incision and the C-terminal half is responsible for the 5' incision. In Corynebacterium aurimucosum (strain ATCC 700975 / DSM 44827 / CIP 107346 / CN-1) (Corynebacterium nigricans), this protein is UvrABC system protein C.